The sequence spans 444 residues: Serine--tRNA ligase (444 aa).

L-serine is bound at residue 243–245 (TAE). Position 274 to 276 (274 to 276 (RSE)) interacts with ATP. Glutamate 297 contributes to the L-serine binding site. 361 to 364 (EISS) contacts ATP. Serine 397 serves as a coordination point for L-serine.

This sequence belongs to the class-II aminoacyl-tRNA synthetase family. Type-1 seryl-tRNA synthetase subfamily. As to quaternary structure, homodimer. The tRNA molecule binds across the dimer.

It is found in the cytoplasm. It carries out the reaction tRNA(Ser) + L-serine + ATP = L-seryl-tRNA(Ser) + AMP + diphosphate + H(+). It catalyses the reaction tRNA(Sec) + L-serine + ATP = L-seryl-tRNA(Sec) + AMP + diphosphate + H(+). Its pathway is aminoacyl-tRNA biosynthesis; selenocysteinyl-tRNA(Sec) biosynthesis; L-seryl-tRNA(Sec) from L-serine and tRNA(Sec): step 1/1. In terms of biological role, catalyzes the attachment of serine to tRNA(Ser). Is also able to aminoacylate tRNA(Sec) with serine, to form the misacylated tRNA L-seryl-tRNA(Sec), which will be further converted into selenocysteinyl-tRNA(Sec). The polypeptide is Serine--tRNA ligase (Acidobacterium capsulatum (strain ATCC 51196 / DSM 11244 / BCRC 80197 / JCM 7670 / NBRC 15755 / NCIMB 13165 / 161)).